The following is a 59-amino-acid chain: Large ribosomal subunit protein uL30 (59 aa).

It belongs to the universal ribosomal protein uL30 family. Part of the 50S ribosomal subunit.

In Buchnera aphidicola subsp. Schizaphis graminum (strain Sg), this protein is Large ribosomal subunit protein uL30.